A 360-amino-acid polypeptide reads, in one-letter code: METQLSNGPTCNNTANGPTTVNNNCSSPVDSGNTEDSKTNLIVNYLPQNMTQEELKSLFGSIGEIESCKLVRDKITGQSLGYGFVNYIDPKDAEKAINTLNGLRLQTKTIKVSYARPSSASIRDANLYVSGLPKTMTQKELEQLFSQYGRIITSRILVDQVTGISRGVGFIRFDKRIEAEEAIKGLNGQKPPGATEPITVKFANNPSQKTNQAILSQLYQSPNRRYPGPLAQQAQRFRLDNLLNMAYGVKSRFSPMTIDGMTSLAGINIPGHPGTGWCIFVYNLAPDADESILWQMFGPFGAVTNVKVIRDFNTNKCKGFGFVTMTNYDEAAMAIASLNGYRLGDRVLQVSFKTNKTHKA.

Residues 1–36 (METQLSNGPTCNNTANGPTTVNNNCSSPVDSGNTED) form a disordered region. RRM domains follow at residues 39–117 (TNLI…YARP) and 125–205 (ANLY…FANN). Residue Ser-221 is modified to Phosphoserine. One can recognise an RRM 3 domain in the interval 277-355 (WCIFVYNLAP…RVLQVSFKTN (79 aa)).

The protein belongs to the RRM elav family. In terms of assembly, interacts with IGF2BP1. Interacts with MAP1B light chain LC1. As to expression, brain; neural-specific. Expressed in the hippocampus.

In terms of biological role, RNA-binding protein that binds to the 3' untranslated region (3'UTR) of target mRNAs. Seems to recognize a GAAA motif. Can bind to its own 3'UTR, the FOS 3'UTR and the ID 3'UTR. The polypeptide is ELAV-like protein 2 (Elavl2) (Mus musculus (Mouse)).